The chain runs to 79 residues: MSDVLERVRKIVIEHLDADPEKVTEKASFIDDLGADSLDNVELVMAFEEEFDIEIPDDAAEHIQTVGDAVKFIQERLGA.

In terms of domain architecture, Carrier spans 2-77; the sequence is SDVLERVRKI…DAVKFIQERL (76 aa). An O-(pantetheine 4'-phosphoryl)serine modification is found at S37.

The protein belongs to the acyl carrier protein (ACP) family. Post-translationally, 4'-phosphopantetheine is transferred from CoA to a specific serine of apo-ACP by AcpS. This modification is essential for activity because fatty acids are bound in thioester linkage to the sulfhydryl of the prosthetic group.

It is found in the cytoplasm. The protein operates within lipid metabolism; fatty acid biosynthesis. Carrier of the growing fatty acid chain in fatty acid biosynthesis. In Phenylobacterium zucineum (strain HLK1), this protein is Acyl carrier protein.